The chain runs to 350 residues: 2-oxoglutarate and iron-dependent oxygenase domain-containing protein 2 (350 aa).

In terms of domain architecture, Fe2OG dioxygenase spans 215–309 (DSHRAFVVKY…RWNLVVWLRA (95 aa)). Fe cation contacts are provided by His-235, Asp-237, and His-290. Arg-300 contacts 2-oxoglutarate.

The protein belongs to the OGFOD2 family. Requires Fe(2+) as cofactor. L-ascorbate is required as a cofactor.

The protein is 2-oxoglutarate and iron-dependent oxygenase domain-containing protein 2 (OGFOD2) of Homo sapiens (Human).